We begin with the raw amino-acid sequence, 407 residues long: Protein ZNF365 (407 aa).

Ser-16 is subject to Phosphoserine. The C2H2-type; degenerate zinc-finger motif lies at Phe-26–His-51. Residue Ser-138 is modified to Phosphoserine. A coiled-coil region spans residues Val-169–Gln-296. Thr-175 carries the phosphothreonine modification. The segment at Leu-347–Arg-392 is disordered. Positions Ala-362 to Glu-381 are enriched in basic and acidic residues. Phosphoserine is present on Ser-369.

In terms of assembly, homodimers. Interacts with NDE1 and NDEL1. Interacts with DISC1. Interacts with PARP1. Interacts with MCRS1.

It is found in the cytoplasm. The protein resides in the cytoskeleton. It localises to the microtubule organizing center. The protein localises to the centrosome. Involved in the regulation of neurogenesis. Negatively regulates neurite outgrowth. Involved in the morphogenesis of basket cells in the somatosensory cortex during embryogenesis. Involved in the positive regulation of oligodendrocyte differentiation during postnatal growth. Involved in dendritic arborization, morphogenesis of spine density dendrite, and establishment of postsynaptic dendrite density in cortical pyramidal neurons. Involved in homologous recombination (HR) repair pathway. Required for proper resolution of DNA double-strand breaks (DSBs) by HR. Is required for recovery of stalled replication forks, and directly contributes to genomic stability. Interacts with PARP1 and mediates MRE11-dependent DNA end resection during replication fork recovery. Contributes to genomic stability by preventing telomere dysfunction. The protein is Protein ZNF365 (ZNF365) of Pongo abelii (Sumatran orangutan).